A 1221-amino-acid polypeptide reads, in one-letter code: Probable serine/threonine-protein kinase DDB_G0286465 (1221 aa).

Disordered regions lie at residues 1-37 (MTLRLDTSLKRGASRNIPPIPTFSSVSNENLSSSPYT), 104-133 (FSPSTGRTKNNNNNNNNNINNNNYKKNDNQ), and 173-263 (ENNS…NNNE). 4 stretches are compositionally biased toward low complexity: residues 24–37 (SSVSNENLSSSPYT), 112–127 (KNNNNNNNNNINNNNY), 173–192 (ENNSQNNNNNKYQINNNMQK), and 204–263 (NNNN…NNNE). Positions 186–627 (INNNMQKTGG…PYKLLDHPFF (442 aa)) constitute a Protein kinase domain. ATP is bound at residue 192–200 (KTGGRNGSV). Lys-271 contacts ATP. Residues 324–344 (NVNNNNSNNNNNNSNNNITNS) are compositionally biased toward low complexity. The segment at 324 to 346 (NVNNNNSNNNNNNSNNNITNSRY) is disordered. The active-site Proton acceptor is the Asp-448. Composition is skewed to low complexity over residues 538-550 (SPSSSSTTSTSTS) and 559-584 (DSSSSASSSSSSSSSSSSSSSSSLPK). 5 disordered regions span residues 538–604 (SPSS…PEKR), 712–782 (PNLS…KEKL), 823–858 (KFEKKQRQIQDSEKVNKNEEENQTKDDADNISPPLP), 959–1008 (KENI…SYCN), and 1105–1152 (KKQE…QQEK). Over residues 591-604 (RSKDNQSKLDPEKR) the composition is skewed to basic and acidic residues. Residues 725–738 (KKQLQQYQQQQKQQ) show a composition bias toward low complexity. A compositionally biased stretch (acidic residues) spans 746 to 756 (DDEEEKEEEEK). Basic and acidic residues-rich tracts occupy residues 757-769 (EKEKEKEKEKEKE) and 823-850 (KFEKKQRQIQDSEKVNKNEEENQTKDDA). Residues 959 to 993 (KENIINFHNNNNNNNNNNNNNNNNNNNNNNNNNNN) are compositionally biased toward low complexity.

It belongs to the protein kinase superfamily. Ser/Thr protein kinase family.

The catalysed reaction is L-seryl-[protein] + ATP = O-phospho-L-seryl-[protein] + ADP + H(+). The enzyme catalyses L-threonyl-[protein] + ATP = O-phospho-L-threonyl-[protein] + ADP + H(+). The sequence is that of Probable serine/threonine-protein kinase DDB_G0286465 from Dictyostelium discoideum (Social amoeba).